Consider the following 306-residue polypeptide: Bifunctional protein FolD (306 aa).

Residues G164–S166, S189, and T230 each bind NADP(+).

Belongs to the tetrahydrofolate dehydrogenase/cyclohydrolase family. Homodimer.

It carries out the reaction (6R)-5,10-methylene-5,6,7,8-tetrahydrofolate + NADP(+) = (6R)-5,10-methenyltetrahydrofolate + NADPH. It catalyses the reaction (6R)-5,10-methenyltetrahydrofolate + H2O = (6R)-10-formyltetrahydrofolate + H(+). It functions in the pathway one-carbon metabolism; tetrahydrofolate interconversion. In terms of biological role, catalyzes the oxidation of 5,10-methylenetetrahydrofolate to 5,10-methenyltetrahydrofolate and then the hydrolysis of 5,10-methenyltetrahydrofolate to 10-formyltetrahydrofolate. In Solibacter usitatus (strain Ellin6076), this protein is Bifunctional protein FolD.